Here is a 292-residue protein sequence, read N- to C-terminus: ATP synthase gamma chain (292 aa).

Belongs to the ATPase gamma chain family. F-type ATPases have 2 components, CF(1) - the catalytic core - and CF(0) - the membrane proton channel. CF(1) has five subunits: alpha(3), beta(3), gamma(1), delta(1), epsilon(1). CF(0) has three main subunits: a, b and c.

It is found in the cell inner membrane. In terms of biological role, produces ATP from ADP in the presence of a proton gradient across the membrane. The gamma chain is believed to be important in regulating ATPase activity and the flow of protons through the CF(0) complex. This chain is ATP synthase gamma chain, found in Bradyrhizobium sp. (strain ORS 278).